The following is a 128-amino-acid chain: uncharacterized protein (128 aa).

3 helical membrane passes run 1–21, 51–71, and 76–96; these read MLVF…LIFL, VRVE…AILG, and ANFL…VYYV.

It is found in the membrane. This is an uncharacterized protein from Saccharomyces cerevisiae (strain ATCC 204508 / S288c) (Baker's yeast).